The following is a 448-amino-acid chain: Chromosomal replication initiator protein DnaA (448 aa).

The tract at residues 1–93 is domain I, interacts with DnaA modulators; it reads MEQIVSSLWS…KPTEQNLSAS (93 aa). Residues 94–110 are domain II; that stretch reads STNKEELTQDTVHKFKT. The segment at 111–328 is domain III, AAA+ region; sequence GLNGRLTFDN…GAINRVSAWC (218 aa). ATP contacts are provided by Gly156, Gly158, Lys159, and Thr160. A domain IV, binds dsDNA region spans residues 329–448; it reads NFTKRQITID…YTNLTRKLSS (120 aa).

This sequence belongs to the DnaA family. Oligomerizes as a right-handed, spiral filament on DNA at oriC.

It localises to the cytoplasm. Plays an essential role in the initiation and regulation of chromosomal replication. ATP-DnaA binds to the origin of replication (oriC) to initiate formation of the DNA replication initiation complex once per cell cycle. Binds the DnaA box (a 9 base pair repeat at the origin) and separates the double-stranded (ds)DNA. Forms a right-handed helical filament on oriC DNA; dsDNA binds to the exterior of the filament while single-stranded (ss)DNA is stabiized in the filament's interior. The ATP-DnaA-oriC complex binds and stabilizes one strand of the AT-rich DNA unwinding element (DUE), permitting loading of DNA polymerase. After initiation quickly degrades to an ADP-DnaA complex that is not apt for DNA replication. Binds acidic phospholipids. In Haemophilus ducreyi (strain 35000HP / ATCC 700724), this protein is Chromosomal replication initiator protein DnaA.